A 431-amino-acid polypeptide reads, in one-letter code: Histidinol dehydrogenase (431 aa).

NAD(+) contacts are provided by Tyr130, Gln192, and Asn215. Positions 238, 260, and 263 each coordinate substrate. Residues Gln260 and His263 each contribute to the Zn(2+) site. Active-site proton acceptor residues include Glu328 and His329. The substrate site is built by His329, Asp362, Glu416, and His421. Asp362 contacts Zn(2+). His421 is a binding site for Zn(2+).

It belongs to the histidinol dehydrogenase family. Zn(2+) is required as a cofactor.

It catalyses the reaction L-histidinol + 2 NAD(+) + H2O = L-histidine + 2 NADH + 3 H(+). The protein operates within amino-acid biosynthesis; L-histidine biosynthesis; L-histidine from 5-phospho-alpha-D-ribose 1-diphosphate: step 9/9. Its function is as follows. Catalyzes the sequential NAD-dependent oxidations of L-histidinol to L-histidinaldehyde and then to L-histidine. The sequence is that of Histidinol dehydrogenase from Thermosynechococcus vestitus (strain NIES-2133 / IAM M-273 / BP-1).